The chain runs to 177 residues: Large ribosomal subunit protein uL6 (177 aa).

The protein belongs to the universal ribosomal protein uL6 family. As to quaternary structure, part of the 50S ribosomal subunit.

This protein binds to the 23S rRNA, and is important in its secondary structure. It is located near the subunit interface in the base of the L7/L12 stalk, and near the tRNA binding site of the peptidyltransferase center. The polypeptide is Large ribosomal subunit protein uL6 (Pseudomonas putida (strain ATCC 700007 / DSM 6899 / JCM 31910 / BCRC 17059 / LMG 24140 / F1)).